The chain runs to 392 residues: Heat-inducible transcription repressor HrcA (392 aa).

This sequence belongs to the HrcA family.

Negative regulator of class I heat shock genes (grpE-dnaK-dnaJ and groELS operons). Prevents heat-shock induction of these operons. The protein is Heat-inducible transcription repressor HrcA of Chlamydia muridarum (strain MoPn / Nigg).